Reading from the N-terminus, the 363-residue chain is Lipase (363 aa).

Positions 1–24 (MVLKQRANYLGFLIVFFTAFLVEA) are cleaved as a signal peptide. Residues 25 to 94 (VPIKRQSNST…SYPDSVVQAM (70 aa)) constitute a propeptide that is removed on maturation. The disordered stretch occupies residues 33–69 (STVDSLPPLIPSRTSAPSSSPSTTDPEAPAMSRNGPL). A compositionally biased stretch (low complexity) spans 43–62 (PSRTSAPSSSPSTTDPEAPA). Intrachain disulfides connect Cys-123–Cys-362, Cys-134–Cys-137, and Cys-329–Cys-338. Ser-238 serves as the catalytic Nucleophile. Asp-297 functions as the Charge relay system in the catalytic mechanism. Ca(2+) is bound at residue Asp-350. His-351 (charge relay system) is an active-site residue.

This sequence belongs to the AB hydrolase superfamily. Lipase family.

It carries out the reaction a triacylglycerol + H2O = a diacylglycerol + a fatty acid + H(+). The protein is Lipase of Rhizomucor miehei.